The sequence spans 295 residues: Fructose-bisphosphate aldolase class 1 (295 aa).

Glu-176 (proton acceptor) is an active-site residue. Lys-213 acts as the Schiff-base intermediate with dihydroxyacetone-P in catalysis.

Belongs to the class I fructose-bisphosphate aldolase family.

The enzyme catalyses beta-D-fructose 1,6-bisphosphate = D-glyceraldehyde 3-phosphate + dihydroxyacetone phosphate. It functions in the pathway carbohydrate degradation; glycolysis; D-glyceraldehyde 3-phosphate and glycerone phosphate from D-glucose: step 4/4. The protein is Fructose-bisphosphate aldolase class 1 of Clostridium beijerinckii (strain ATCC 51743 / NCIMB 8052) (Clostridium acetobutylicum).